Reading from the N-terminus, the 94-residue chain is Alpha-galactosyl-binding lectin (94 aa).

As to quaternary structure, homodimer. In terms of processing, contains three disulfide bonds.

Functionally, alpha-galactosyl-binding lectin with preference for galactose-alpha-1,4-galactose. In Lyophyllum decastes (Fried chicken mushroom), this protein is Alpha-galactosyl-binding lectin.